The primary structure comprises 640 residues: MGTAAEVRMVLYEDDSVQVNYADGSTLQLSPCGSEFLFEKAPPPSTHPLEQPERIRQRTHFVISNYREQLQRALDFRNSSATCPFLSESIIPSERKKRVFIDFSEVEWPSPDRDDCITYSESGIVKITSLDGHAYLCLPRSQHEFTVHFLCKVSQKPDSSVMPPETKNRVPKEELVGKTRNVCRSGRLSGQRLRNKENEPPRQLLTSKNASANIHCVSETEGREELPSPGTKRRYVHVWVKQSWSAASCPEEWKYPLSLGLRFYNKVPAASAADAEVPVSGIVTSDNPEERGTGVSVLPRALLLSCSAPHMHRWNFCDSLLQRQSDAEEYSYPELIKVVWYKGVTYRLTHKNVNSIEIFPGDGSVFKSEGTHFGNYFTYSSQDNSGKREEKTYSVNNLPPDRPGNLYSVRSLIKQATRILQHCAKIRLSLSHNYRVCCWRMAPGVNVSSILPVLLKESLIPGVGRFLAYSDDKVHAVFLDGVTLTLNWDLSSSAEKTQVDQGLRLRWCRLTFPDGQDQLIQTEHPGVYERYVTSVVTWCRRLTQTSSRHVSPRLSPVPEENWSVASELEKIQKFNWLLENSGVLNLTSGKKNEQCSSDHCKPGSSETLPEATNEESVSVALKRTSEVLQDIDYLLSLTRK.

Positions Gln-594–Glu-614 are disordered.

This is an uncharacterized protein from Rattus norvegicus (Rat).